A 68-amino-acid chain; its full sequence is Ribosome modulation factor (68 aa).

This sequence belongs to the ribosome modulation factor family.

The protein resides in the cytoplasm. During stationary phase, converts 70S ribosomes to an inactive dimeric form (100S ribosomes). The chain is Ribosome modulation factor from Saccharophagus degradans (strain 2-40 / ATCC 43961 / DSM 17024).